The primary structure comprises 250 residues: Probable aquaporin TIP1-1 (250 aa).

Transmembrane regions (helical) follow at residues 25 to 44 (AEFI…GMAF) and 58 to 77 (LIAA…SVGA). The NPA 1 motif lies at 85 to 87 (NPA). The next 3 helical transmembrane spans lie at 103 to 121 (GLLY…CFLL), 144 to 163 (LVLE…ATAV), and 170 to 192 (LGTI…GGAF). An NPA 2 motif is present at residues 198 to 200 (NPA). A helical membrane pass occupies residues 216-233 (WVYWVGPLIGGGLAGVIY).

It belongs to the MIP/aquaporin (TC 1.A.8) family. TIP (TC 1.A.8.10) subfamily. In terms of tissue distribution, expressed in roots and leaves.

The protein resides in the vacuole membrane. Functionally, aquaporins facilitate the transport of water and small neutral solutes across cell membranes. May be involved in transport from the vacuolar compartment to the cytoplasm. This chain is Probable aquaporin TIP1-1 (TIP1-1), found in Oryza sativa subsp. japonica (Rice).